Consider the following 347-residue polypeptide: D-alanine--D-alanine ligase (347 aa).

An ATP-grasp domain is found at 138–339; that stretch reads KILCSHAGIP…YSQVIETILA (202 aa). ATP is bound at residue 171–226; it reads SDRFTFPLFVKPVDAGSSFGCTFVDFFEQLPVAIEHALQHGKSAIVEPALDAPEVF. Mg(2+) is bound by residues D296, E308, and N310.

This sequence belongs to the D-alanine--D-alanine ligase family. The cofactor is Mg(2+). Requires Mn(2+) as cofactor.

It is found in the cytoplasm. The catalysed reaction is 2 D-alanine + ATP = D-alanyl-D-alanine + ADP + phosphate + H(+). Its pathway is cell wall biogenesis; peptidoglycan biosynthesis. Cell wall formation. This is D-alanine--D-alanine ligase from Tropheryma whipplei (strain Twist) (Whipple's bacillus).